Here is a 305-residue protein sequence, read N- to C-terminus: Tyrosine recombinase XerC (305 aa).

The Core-binding (CB) domain occupies 4–95; the sequence is TSIQALINKW…AVKNFYRFLE (92 aa). Residues 116–298 enclose the Tyr recombinase domain; that stretch reads LLPKALSEDD…SIKHLEAVYT (183 aa). Active-site residues include arginine 159, lysine 182, histidine 250, arginine 253, and histidine 276. The active-site O-(3'-phospho-DNA)-tyrosine intermediate is the tyrosine 285.

It belongs to the 'phage' integrase family. XerC subfamily. In terms of assembly, forms a cyclic heterotetrameric complex composed of two molecules of XerC and two molecules of XerD.

The protein localises to the cytoplasm. Site-specific tyrosine recombinase, which acts by catalyzing the cutting and rejoining of the recombining DNA molecules. The XerC-XerD complex is essential to convert dimers of the bacterial chromosome into monomers to permit their segregation at cell division. It also contributes to the segregational stability of plasmids. In Rickettsia peacockii (strain Rustic), this protein is Tyrosine recombinase XerC.